The sequence spans 434 residues: Protein trichome birefringence-like 3 (434 aa).

A helical; Signal-anchor for type II membrane protein membrane pass occupies residues 15-35; that stretch reads IPLSIIVLVLCGFMFFILLYT. Residues 166–168 carry the GDS motif motif; sequence GDS. The DCXHWCLPGXXDXWN motif signature appears at 413-427; the sequence is DCIHWCLPGLPDTWN.

The protein belongs to the PC-esterase family. TBL subfamily.

It is found in the golgi apparatus membrane. Functionally, involved in secondary cell wall cellulose deposition. Required for normal stem development. May act as a bridging protein that binds pectin and other cell wall polysaccharides. Probably involved in maintaining esterification of pectins. May be involved in the specific O-acetylation of cell wall polymers. This is Protein trichome birefringence-like 3 (TBL3) from Arabidopsis thaliana (Mouse-ear cress).